The following is a 315-amino-acid chain: Ribosomal RNA small subunit methyltransferase H (315 aa).

S-adenosyl-L-methionine contacts are provided by residues 35 to 37 (GGH), D55, F79, D101, and Q108.

Belongs to the methyltransferase superfamily. RsmH family.

Its subcellular location is the cytoplasm. The catalysed reaction is cytidine(1402) in 16S rRNA + S-adenosyl-L-methionine = N(4)-methylcytidine(1402) in 16S rRNA + S-adenosyl-L-homocysteine + H(+). Its function is as follows. Specifically methylates the N4 position of cytidine in position 1402 (C1402) of 16S rRNA. In Sodalis glossinidius (strain morsitans), this protein is Ribosomal RNA small subunit methyltransferase H.